The chain runs to 152 residues: SsrA-binding protein (152 aa).

This sequence belongs to the SmpB family.

The protein resides in the cytoplasm. In terms of biological role, required for rescue of stalled ribosomes mediated by trans-translation. Binds to transfer-messenger RNA (tmRNA), required for stable association of tmRNA with ribosomes. tmRNA and SmpB together mimic tRNA shape, replacing the anticodon stem-loop with SmpB. tmRNA is encoded by the ssrA gene; the 2 termini fold to resemble tRNA(Ala) and it encodes a 'tag peptide', a short internal open reading frame. During trans-translation Ala-aminoacylated tmRNA acts like a tRNA, entering the A-site of stalled ribosomes, displacing the stalled mRNA. The ribosome then switches to translate the ORF on the tmRNA; the nascent peptide is terminated with the 'tag peptide' encoded by the tmRNA and targeted for degradation. The ribosome is freed to recommence translation, which seems to be the essential function of trans-translation. The sequence is that of SsrA-binding protein from Rickettsia massiliae (strain Mtu5).